We begin with the raw amino-acid sequence, 478 residues long: Protein nucleotidyltransferase YdiU (478 aa).

Positions 84, 86, 87, 107, 119, 120, 170, and 177 each coordinate ATP. The Proton acceptor role is filled by D246. 2 residues coordinate Mg(2+): N247 and D256. D256 is a binding site for ATP.

It belongs to the SELO family. Mg(2+) is required as a cofactor. The cofactor is Mn(2+).

The catalysed reaction is L-seryl-[protein] + ATP = 3-O-(5'-adenylyl)-L-seryl-[protein] + diphosphate. It carries out the reaction L-threonyl-[protein] + ATP = 3-O-(5'-adenylyl)-L-threonyl-[protein] + diphosphate. The enzyme catalyses L-tyrosyl-[protein] + ATP = O-(5'-adenylyl)-L-tyrosyl-[protein] + diphosphate. It catalyses the reaction L-histidyl-[protein] + UTP = N(tele)-(5'-uridylyl)-L-histidyl-[protein] + diphosphate. The catalysed reaction is L-seryl-[protein] + UTP = O-(5'-uridylyl)-L-seryl-[protein] + diphosphate. It carries out the reaction L-tyrosyl-[protein] + UTP = O-(5'-uridylyl)-L-tyrosyl-[protein] + diphosphate. Nucleotidyltransferase involved in the post-translational modification of proteins. It can catalyze the addition of adenosine monophosphate (AMP) or uridine monophosphate (UMP) to a protein, resulting in modifications known as AMPylation and UMPylation. The polypeptide is Protein nucleotidyltransferase YdiU (Escherichia coli (strain ATCC 8739 / DSM 1576 / NBRC 3972 / NCIMB 8545 / WDCM 00012 / Crooks)).